The following is a 381-amino-acid chain: Anti-sigma-I factor RsgI (381 aa).

Over 1-63 (MRRGIIVEKN…FDFFKLRPFK (63 aa)) the chain is Cytoplasmic. In terms of domain architecture, RsgI N-terminal anti-sigma spans 2-50 (RRGIIVEKNKKFVTLLTPDGQFLKAKNDRHSYEIGEEIMLPSETRMGRR). A helical membrane pass occupies residues 64-84 (MGIFTMTAIMLFIFIVLPVFS). The Extracellular segment spans residues 85–381 (NNKAYAYMTI…NEDSPSAPGE (297 aa)). The segment at 198–381 (SDMQTREKAK…NEDSPSAPGE (184 aa)) is disordered. Basic and acidic residues-rich tracts occupy residues 200-210 (MQTREKAKKEG), 219-244 (SNEKNDNKDIKDDSSKPSGEEDQKSD), 273-321 (GDQK…DKGN), and 349-359 (SRRDNASDRRN).

In terms of assembly, interacts (via RsgI N-terminal anti-sigma domain) with SigI.

The protein resides in the cell membrane. In terms of biological role, anti-sigma factor for SigI. Negatively regulates SigI activity through direct interaction. The sequence is that of Anti-sigma-I factor RsgI from Bacillus subtilis (strain 168).